We begin with the raw amino-acid sequence, 59 residues long: Large ribosomal subunit protein bL33 (59 aa).

Residues 26 to 59 (RYTTTKNKKNNTERLVLKKYNPNLKKHTEHKEIK) form a disordered region.

Belongs to the bacterial ribosomal protein bL33 family.

In Chlorobium phaeobacteroides (strain BS1), this protein is Large ribosomal subunit protein bL33.